Here is a 710-residue protein sequence, read N- to C-terminus: F-box only protein 40 (710 aa).

A TRAF-type zinc finger spans residues 53 to 114 (EHTLLCPLEQ…VDSETFLHEN (62 aa)). 2 disordered regions span residues 152–174 (DATEEEPDMNGDTSWEETGGAVG) and 234–279 (GSLG…SQEL). A compositionally biased stretch (basic and acidic residues) spans 238 to 248 (KSEDKNGDVAG). The F-box domain occupies 572-626 (LNSLTSLPLEVLQYIAGFLDSISLSQLSQVSVLMRNICATLLQERGMVLSQWKKK).

As to quaternary structure, directly interacts with SKP1 and CUL1. Expressed only in heart and skeletal muscle.

It is found in the cytoplasm. Functionally, probable substrate-recognition component of the SCF (SKP1-CUL1-F-box protein)-type E3 ubiquitin ligase complex that may function in myogenesis. This is F-box only protein 40 (Fbxo40) from Mus musculus (Mouse).